The primary structure comprises 121 residues: Large ribosomal subunit protein bL12 (121 aa).

Belongs to the bacterial ribosomal protein bL12 family. In terms of assembly, homodimer. Part of the ribosomal stalk of the 50S ribosomal subunit. Forms a multimeric L10(L12)X complex, where L10 forms an elongated spine to which 2 to 4 L12 dimers bind in a sequential fashion. Binds GTP-bound translation factors.

Forms part of the ribosomal stalk which helps the ribosome interact with GTP-bound translation factors. Is thus essential for accurate translation. The sequence is that of Large ribosomal subunit protein bL12 from Xanthomonas campestris pv. campestris (strain B100).